We begin with the raw amino-acid sequence, 532 residues long: Berberine bridge enzyme-like 18 (532 aa).

The signal sequence occupies residues 1 to 29 (MKFQSFFSSVLIFFTTSTLLLSIPHPVSA). Residues Asn-30, Asn-33, Asn-46, Asn-59, Asn-147, Asn-169, and Asn-262 are each glycosylated (N-linked (GlcNAc...) asparagine). Cysteines 40 and 102 form a disulfide. Residues 80-254 (DVPKPVLILT…LSWKIGLINV (175 aa)) form the FAD-binding PCMH-type domain. A cross-link (6-(S-cysteinyl)-8alpha-(pros-histidyl)-FAD (His-Cys)) is located at residues 117–179 (HDYEGLSYVT…RTLAFPAGVC (63 aa)).

Belongs to the oxygen-dependent FAD-linked oxidoreductase family. It depends on FAD as a cofactor. The FAD cofactor is bound via a bicovalent 6-S-cysteinyl, 8alpha-N1-histidyl FAD linkage.

The protein resides in the secreted. Its subcellular location is the cell wall. This chain is Berberine bridge enzyme-like 18, found in Arabidopsis thaliana (Mouse-ear cress).